The following is a 394-amino-acid chain: Acetyl-CoA acetyltransferase (394 aa).

C89 acts as the Acyl-thioester intermediate in catalysis. Catalysis depends on proton acceptor residues H350 and C380.

Belongs to the thiolase-like superfamily. Thiolase family. Homotetramer.

Its subcellular location is the cytoplasm. It carries out the reaction 2 acetyl-CoA = acetoacetyl-CoA + CoA. It participates in biopolymer metabolism; poly-(R)-3-hydroxybutanoate biosynthesis. It functions in the pathway metabolic intermediate biosynthesis; (R)-mevalonate biosynthesis; (R)-mevalonate from acetyl-CoA: step 1/3. This Allochromatium vinosum (strain ATCC 17899 / DSM 180 / NBRC 103801 / NCIMB 10441 / D) (Chromatium vinosum) protein is Acetyl-CoA acetyltransferase.